The primary structure comprises 102 residues: MADDVDQQQTTNTVEEPLDLIRLSLDERIYVKMRNDRELRGRLHAYDQHLNMILGDVEETVTTIEIDEETYEEIYKSTKRNIPMLFVRGDGVVLVAPPLRVG.

Residue A2 is modified to N-acetylalanine. A Sm domain is found at 16-101 (EPLDLIRLSL…VVLVAPPLRV (86 aa)).

The protein belongs to the snRNP Sm proteins family. Component of the precatalytic spliceosome (spliceosome B complex). Component of the U4/U6-U5 tri-snRNP complex, a building block of the precatalytic spliceosome (spliceosome B complex). The U4/U6-U5 tri-snRNP complex is composed of the U4, U6 and U5 snRNAs and at least PRPF3, PRPF4, PRPF6, PRPF8, PRPF31, SNRNP200, TXNL4A, SNRNP40, SNRPB, SNRPD1, SNRPD2, SNRPD3, SNRPE, SNRPF, SNRPG, DDX23, CD2BP2, PPIH, SNU13, EFTUD2, SART1 and USP39, plus LSM2, LSM3, LSM4, LSM5, LSM6, LSM7 and LSM8. LSM2, LSM3, LSM4, LSM5, LSM6, LSM7 and LSM8 form a heptameric, ring-shaped subcomplex (the LSM2-8 complex) that is part of the U4/U6-U5 tri-snRNP complex and the precatalytic spliceosome.

It localises to the nucleus. Plays a role in pre-mRNA splicing as component of the U4/U6-U5 tri-snRNP complex that is involved in spliceosome assembly, and as component of the precatalytic spliceosome (spliceosome B complex). The heptameric LSM2-8 complex binds specifically to the 3'-terminal U-tract of U6 snRNA. This is U6 snRNA-associated Sm-like protein LSm3 (LSM3) from Bos taurus (Bovine).